The following is a 451-amino-acid chain: Protoheme IX farnesyltransferase, mitochondrial (451 aa).

Transmembrane regions (helical) follow at residues 149 to 169 (TILV…PATV), 240 to 260 (PTVA…YTSL), 265 to 285 (IINT…GWAA), 289 to 309 (LTHP…FPHF), 339 to 359 (VALR…YFNI), and 414 to 434 (KAFF…ILHK).

This sequence belongs to the UbiA prenyltransferase family.

Its subcellular location is the mitochondrion membrane. In terms of biological role, converts protoheme IX and farnesyl diphosphate to heme O. The protein is Protoheme IX farnesyltransferase, mitochondrial (COX10) of Candida glabrata (strain ATCC 2001 / BCRC 20586 / JCM 3761 / NBRC 0622 / NRRL Y-65 / CBS 138) (Yeast).